The sequence spans 2226 residues: Rotatin (2226 aa).

The tract at residues 295–345 (ARGTHHSQNPSPGSSSPRPSVVGRTGQRPRGDGQDWDAASSSGSSSHAHVN) is disordered. 2 stretches are compositionally biased toward low complexity: residues 304–318 (PSPGSSSPRPSVVGR) and 332–343 (AASSSGSSSHAH). Ser310 carries the post-translational modification Phosphoserine. Lys811 carries the post-translational modification N6-acetyllysine. Residues 1534–1554 (SRTSQDRDPSSLSTSETTVAP) form a disordered region. The span at 1543–1554 (SSLSTSETTVAP) shows a compositional bias: polar residues.

Belongs to the rotatin family. Interacts with PPP1R35; this interaction allows the mutual recruitment to the centriole.

The protein localises to the cytoplasm. The protein resides in the cytoskeleton. It localises to the cilium basal body. It is found in the microtubule organizing center. Its subcellular location is the centrosome. Its function is as follows. Involved in the genetic cascade that governs left-right specification. Plays a role in the maintenance of a normal ciliary structure. Required for correct asymmetric expression of NODAL, LEFTY and PITX2. This Homo sapiens (Human) protein is Rotatin.